The following is a 232-amino-acid chain: MLEGIFDINHVFDEEGIKTLKRFGWDGSVAVQNHNEYSEEKINTAVEYGENCEFKVYSGVKISTKNQNEMEKAVKKYRNKVDILLVEGGDVKINRRVLEMNDVDILSTPELNRMDNGLDHILARLGSTNRVAVELNFGNLLKSKNYDRSKILWAFQRNLKLSKKYDTPVVISSGANDIYGIKAPGDLRGFLNTVADPLYSKKIIETTSKIIDYRLYLKNKNVLMPGLEIVEE.

The protein belongs to the eukaryotic/archaeal RNase P protein component 3 family. Consists of a catalytic RNA component and at least 5 protein subunits.

The protein localises to the cytoplasm. It carries out the reaction Endonucleolytic cleavage of RNA, removing 5'-extranucleotides from tRNA precursor.. Part of ribonuclease P, a protein complex that generates mature tRNA molecules by cleaving their 5'-ends. The protein is Ribonuclease P protein component 3 of Methanococcus maripaludis (strain DSM 14266 / JCM 13030 / NBRC 101832 / S2 / LL).